Here is a 311-residue protein sequence, read N- to C-terminus: tRNA dimethylallyltransferase (311 aa).

10 to 17 (GPTAVGKT) contributes to the ATP binding site. 12–17 (TAVGKT) provides a ligand contact to substrate. The tract at residues 35-38 (DSMQ) is interaction with substrate tRNA.

This sequence belongs to the IPP transferase family. As to quaternary structure, monomer. Mg(2+) serves as cofactor.

It carries out the reaction adenosine(37) in tRNA + dimethylallyl diphosphate = N(6)-dimethylallyladenosine(37) in tRNA + diphosphate. Catalyzes the transfer of a dimethylallyl group onto the adenine at position 37 in tRNAs that read codons beginning with uridine, leading to the formation of N6-(dimethylallyl)adenosine (i(6)A). The protein is tRNA dimethylallyltransferase of Anoxybacillus flavithermus (strain DSM 21510 / WK1).